The primary structure comprises 507 residues: Protoheme IX farnesyltransferase, mitochondrial (507 aa).

Over residues 72 to 90 (STSASASTTHDSTLSSSPT) the composition is skewed to low complexity. A disordered region spans residues 72–136 (STSASASTTH…RGEKPLPPDA (65 aa)). Basic residues predominate over residues 99–111 (KDHKIAPHRKRQA). Transmembrane regions (helical) follow at residues 166 to 186 (LTML…VPEM), 199 to 219 (PLTL…ANAL), 248 to 268 (AAVL…YFGV), 270 to 290 (PTVS…YTPL), 298 to 318 (TWIG…AAAG), 339 to 359 (IGGW…FMAL), 392 to 412 (FVFI…WSFA), and 441 to 461 (GLFW…LLHK).

The protein belongs to the UbiA prenyltransferase family.

It localises to the mitochondrion membrane. It carries out the reaction heme b + (2E,6E)-farnesyl diphosphate + H2O = Fe(II)-heme o + diphosphate. Functionally, converts protoheme IX and farnesyl diphosphate to heme O. In Gibberella zeae (strain ATCC MYA-4620 / CBS 123657 / FGSC 9075 / NRRL 31084 / PH-1) (Wheat head blight fungus), this protein is Protoheme IX farnesyltransferase, mitochondrial (COX10).